We begin with the raw amino-acid sequence, 264 residues long: Thiazole synthase (264 aa).

The active-site Schiff-base intermediate with DXP is the lysine 106. 1-deoxy-D-xylulose 5-phosphate is bound by residues glycine 167, 193-194, and 215-216; these read AG and NT.

Belongs to the ThiG family. In terms of assembly, homotetramer. Forms heterodimers with either ThiH or ThiS.

It is found in the cytoplasm. The enzyme catalyses [ThiS sulfur-carrier protein]-C-terminal-Gly-aminoethanethioate + 2-iminoacetate + 1-deoxy-D-xylulose 5-phosphate = [ThiS sulfur-carrier protein]-C-terminal Gly-Gly + 2-[(2R,5Z)-2-carboxy-4-methylthiazol-5(2H)-ylidene]ethyl phosphate + 2 H2O + H(+). It functions in the pathway cofactor biosynthesis; thiamine diphosphate biosynthesis. Its function is as follows. Catalyzes the rearrangement of 1-deoxy-D-xylulose 5-phosphate (DXP) to produce the thiazole phosphate moiety of thiamine. Sulfur is provided by the thiocarboxylate moiety of the carrier protein ThiS. In vitro, sulfur can be provided by H(2)S. In Xylella fastidiosa (strain Temecula1 / ATCC 700964), this protein is Thiazole synthase.